The sequence spans 218 residues: Nonsense-mediated decay protein 4 (218 aa).

Its subcellular location is the cytoplasm. Involved in nonsense-mediated decay of mRNAs containing premature stop codons. This chain is Nonsense-mediated decay protein 4 (NMD4), found in Saccharomyces cerevisiae (strain ATCC 204508 / S288c) (Baker's yeast).